The primary structure comprises 157 residues: Thioredoxin 2 (157 aa).

The N-terminal stretch at 1 to 23 is a signal peptide; sequence MKKYIFFFLFSFINFFFVYDVTC. In terms of domain architecture, Thioredoxin spans 46 to 157; it reads LRMFKKVPRL…DLIALIKKHL (112 aa). Active-site nucleophile residues include Cys82 and Cys85. Residues Cys82 and Cys85 are joined by a disulfide bond.

This sequence belongs to the thioredoxin family. In terms of assembly, monomer. Component of the Plasmodium translocon of exported proteins (PTEX) complex composed of HSP101, EXP2, PTEX150, PTEX88 and TRX2. Post-translationally, the disulfide bond between Cys-82 and Cys-85 acts as a redox-active center and is reduced by thioredoxin reductase TRXR.

It localises to the parasitophorous vacuole membrane. Functionally, participates in various redox reactions through the reversible oxidation of its active center dithiol to a disulfide and catalyzes dithiol-disulfide exchange reactions. As part of the translocon PTEX complex, plays a role in the export of parasite proteins into the host erythrocyte. The translocon PTEX complex is a multi-protein machinery resident in the parasite parasitophorous vacuolar membrane, responsible for protein secretion into host cells. May contribute to the unfolding of proteins containing the PEXEL localization motif before their passage through the translocon or regulate the PTEX complex function. The chain is Thioredoxin 2 from Plasmodium falciparum (isolate 3D7).